We begin with the raw amino-acid sequence, 349 residues long: S-adenosylmethionine:tRNA ribosyltransferase-isomerase (349 aa).

The protein belongs to the QueA family. As to quaternary structure, monomer.

Its subcellular location is the cytoplasm. It catalyses the reaction 7-aminomethyl-7-carbaguanosine(34) in tRNA + S-adenosyl-L-methionine = epoxyqueuosine(34) in tRNA + adenine + L-methionine + 2 H(+). The protein operates within tRNA modification; tRNA-queuosine biosynthesis. Its function is as follows. Transfers and isomerizes the ribose moiety from AdoMet to the 7-aminomethyl group of 7-deazaguanine (preQ1-tRNA) to give epoxyqueuosine (oQ-tRNA). This chain is S-adenosylmethionine:tRNA ribosyltransferase-isomerase, found in Azotobacter vinelandii (strain DJ / ATCC BAA-1303).